The following is a 345-amino-acid chain: Nicotinate-nucleotide--dimethylbenzimidazole phosphoribosyltransferase (345 aa).

Glu-311 functions as the Proton acceptor in the catalytic mechanism.

It belongs to the CobT family.

The enzyme catalyses 5,6-dimethylbenzimidazole + nicotinate beta-D-ribonucleotide = alpha-ribazole 5'-phosphate + nicotinate + H(+). Its pathway is nucleoside biosynthesis; alpha-ribazole biosynthesis; alpha-ribazole from 5,6-dimethylbenzimidazole: step 1/2. Functionally, catalyzes the synthesis of alpha-ribazole-5'-phosphate from nicotinate mononucleotide (NAMN) and 5,6-dimethylbenzimidazole (DMB). The polypeptide is Nicotinate-nucleotide--dimethylbenzimidazole phosphoribosyltransferase (Janthinobacterium sp. (strain Marseille) (Minibacterium massiliensis)).